Reading from the N-terminus, the 353-residue chain is Ribosomal RNA small subunit methyltransferase (353 aa).

A compositionally biased stretch (basic residues) spans 1–10; it reads MAGGKIRKEK. The tract at residues 1-23 is disordered; that stretch reads MAGGKIRKEKPKASNRAPSNHYQ. S-adenosyl-L-methionine contacts are provided by histidine 35, leucine 37, glycine 62, glutamate 83, aspartate 111, and asparagine 126. The disordered stretch occupies residues 270-313; it reads ALNTTSMDLGDQSMGMEDDDNEMDDDDMEMDEGEGDGGETSEFK. Over residues 285-308 the composition is skewed to acidic residues; it reads MEDDDNEMDDDDMEMDEGEGDGGE.

Belongs to the class I-like SAM-binding methyltransferase superfamily. rRNA adenine N(6)-methyltransferase family. In terms of tissue distribution, expressed in rapidly dividing tissues, including root meristems and lateral root primordia, developing cotyledons and leaves, petals, anther, pollen grains and silique abscission zone.

It is found in the nucleus. The protein localises to the nucleolus. The catalysed reaction is adenosine(1785)/adenosine(1786) in 18S rRNA + 4 S-adenosyl-L-methionine = N(6)-dimethyladenosine(1785)/N(6)-dimethyladenosine(1786) in 18S rRNA + 4 S-adenosyl-L-homocysteine + 4 H(+). N6-adenine methyltransferase which modifies the AA dinucleotide at the plant nuclear 18S rRNA nucleotides A1785 and A1786. Required for generating appropriate patterns of gene expression during root development, including the cell-specific expression of transcriptional regulators involved in root hair and non-hair cells patterning. The protein is Ribosomal RNA small subunit methyltransferase of Arabidopsis thaliana (Mouse-ear cress).